We begin with the raw amino-acid sequence, 388 residues long: Quinolone resistance protein NorA (388 aa).

Transmembrane regions (helical) follow at residues Ile5–Val25, Leu42–Ala62, Leu69–His89, Val99–Ile119, Phe129–Phe149, Met157–Ile177, Trp201–Phe221, Asp239–Phe259, Leu269–Ala289, Trp293–Ile313, Leu331–Phe351, and Ile355–Ile375.

This sequence belongs to the major facilitator superfamily. TCR/Tet family.

The protein resides in the cell membrane. Its function is as follows. Involved in quinolone resistance. May constitute a membrane-associated active efflux pump of hydrophilic quinolones. The polypeptide is Quinolone resistance protein NorA (norA) (Staphylococcus aureus (strain Mu50 / ATCC 700699)).